The sequence spans 593 residues: PiggyBac transposable element-derived protein 3 (593 aa).

Disordered regions lie at residues 27–53 and 69–105; these read IQPPENATAPVSDEESGDEEGGTINNL and SDAESDSDDPSYAPKDDSPDEVPSTFTVQQPPPSRRR. Residues 38 to 47 are compositionally biased toward acidic residues; sequence SDEESGDEEG. A Phosphoserine modification is found at serine 86.

Expressed in heart and oocytes, but not in granulosa cells (at protein level).

Its subcellular location is the nucleus. Binds in vitro to PGBD3-related transposable elements, called MER85s; these non-autonomous 140 bp elements are characterized by the presence of PGBD3 terminal inverted repeats and the absence of internal transposase ORF. This Homo sapiens (Human) protein is PiggyBac transposable element-derived protein 3 (PGBD3).